A 130-amino-acid chain; its full sequence is Small ribosomal subunit protein bS6 (130 aa).

Residues 100 to 130 form a disordered region; the sequence is SPMVKAKDERRERREDFAEAGDDVEAGDSEE. Positions 104-116 are enriched in basic and acidic residues; it reads KAKDERRERREDF. Residues 117-130 show a composition bias toward acidic residues; sequence AEAGDDVEAGDSEE.

This sequence belongs to the bacterial ribosomal protein bS6 family.

Binds together with bS18 to 16S ribosomal RNA. This Pectobacterium atrosepticum (strain SCRI 1043 / ATCC BAA-672) (Erwinia carotovora subsp. atroseptica) protein is Small ribosomal subunit protein bS6.